Consider the following 717-residue polypeptide: Epithelial splicing regulatory protein 2 (717 aa).

Positions 1-14 (MTPPPPPPPPPGPD) are enriched in pro residues. The segment at 1-23 (MTPPPPPPPPPGPDPAVDSATDP) is disordered. Serine 83 is modified (phosphoserine). RRM domains follow at residues 247-343 (TVVR…RFLS), 348-428 (VILR…RSTA), and 465-545 (DCVR…PCST). Serine 563 carries the phosphoserine modification.

It belongs to the ESRP family. Interacts with RBPMS. Epithelial cell-specific.

The protein resides in the nucleus. MRNA splicing factor that regulates the formation of epithelial cell-specific isoforms. Specifically regulates the expression of FGFR2-IIIb, an epithelial cell-specific isoform of FGFR2. Also regulates the splicing of CD44, CTNND1, ENAH, 3 transcripts that undergo changes in splicing during the epithelial-to-mesenchymal transition (EMT). Acts by directly binding specific sequences in mRNAs. Binds the GU-rich sequence motifs in the ISE/ISS-3, a cis-element regulatory region present in the mRNA of FGFR2. The sequence is that of Epithelial splicing regulatory protein 2 (Esrp2) from Mus musculus (Mouse).